The following is a 227-amino-acid chain: Cytochrome c oxidase subunit 2 (227 aa).

Residues 1–14 (MAHPAQLGFQDAAS) are Mitochondrial intermembrane-facing. The chain crosses the membrane as a helical span at residues 15-45 (PIMEELMYFHDHTLMIVFLISSLVLYIISLM). The Mitochondrial matrix portion of the chain corresponds to 46–59 (LTTELTHTSTMDAQ). A helical membrane pass occupies residues 60–87 (EVETVWTILPAVILILIALPSLRILYMM). Topologically, residues 88-227 (DEITTPSLTL…HFEEWLLSTL (140 aa)) are mitochondrial intermembrane. Cu cation contacts are provided by His161, Cys196, Glu198, Cys200, His204, and Met207. Glu198 provides a ligand contact to Mg(2+).

The protein belongs to the cytochrome c oxidase subunit 2 family. Component of the cytochrome c oxidase (complex IV, CIV), a multisubunit enzyme composed of 14 subunits. The complex is composed of a catalytic core of 3 subunits MT-CO1, MT-CO2 and MT-CO3, encoded in the mitochondrial DNA, and 11 supernumerary subunits COX4I, COX5A, COX5B, COX6A, COX6B, COX6C, COX7A, COX7B, COX7C, COX8 and NDUFA4, which are encoded in the nuclear genome. The complex exists as a monomer or a dimer and forms supercomplexes (SCs) in the inner mitochondrial membrane with NADH-ubiquinone oxidoreductase (complex I, CI) and ubiquinol-cytochrome c oxidoreductase (cytochrome b-c1 complex, complex III, CIII), resulting in different assemblies (supercomplex SCI(1)III(2)IV(1) and megacomplex MCI(2)III(2)IV(2)). Found in a complex with TMEM177, COA6, COX18, COX20, SCO1 and SCO2. Interacts with TMEM177 in a COX20-dependent manner. Interacts with COX20. Interacts with COX16. It depends on Cu cation as a cofactor.

It localises to the mitochondrion inner membrane. It carries out the reaction 4 Fe(II)-[cytochrome c] + O2 + 8 H(+)(in) = 4 Fe(III)-[cytochrome c] + 2 H2O + 4 H(+)(out). Component of the cytochrome c oxidase, the last enzyme in the mitochondrial electron transport chain which drives oxidative phosphorylation. The respiratory chain contains 3 multisubunit complexes succinate dehydrogenase (complex II, CII), ubiquinol-cytochrome c oxidoreductase (cytochrome b-c1 complex, complex III, CIII) and cytochrome c oxidase (complex IV, CIV), that cooperate to transfer electrons derived from NADH and succinate to molecular oxygen, creating an electrochemical gradient over the inner membrane that drives transmembrane transport and the ATP synthase. Cytochrome c oxidase is the component of the respiratory chain that catalyzes the reduction of oxygen to water. Electrons originating from reduced cytochrome c in the intermembrane space (IMS) are transferred via the dinuclear copper A center (CU(A)) of subunit 2 and heme A of subunit 1 to the active site in subunit 1, a binuclear center (BNC) formed by heme A3 and copper B (CU(B)). The BNC reduces molecular oxygen to 2 water molecules using 4 electrons from cytochrome c in the IMS and 4 protons from the mitochondrial matrix. The protein is Cytochrome c oxidase subunit 2 (MT-CO2) of Microcebus tavaratra (Northern rufous mouse lemur).